A 310-amino-acid chain; its full sequence is MGIVIGIICAFIIIVQFIIGNVANGFIALVNIIDWVKRRKISLVDQIITALAISRIDMLCSTFLIVLITSLYPDLNTAVNMVKISNNIWIVANHFSIWLATSLSIFYFLKIANFSNYVFLCLRWRLSKVVSVTLLLSLVLLLMNILIMNMHIDTWSDGFKRNVSFGFRSKNCTRFFKLALLINTTFTCVPFTVSMVAFLLLIFSLWRHLKNMQYHAKGSRDPSTAVHIKALQMVVVFVLFYTFFFLSLAIQLWTSESLEKNNLFYVTLIITFPSVHSCMLILRNSKLRQASLLVLWWLLCRSKDIQTLVP.

Residues 1 to 2 (MG) lie on the Extracellular side of the membrane. The helical transmembrane segment at 3 to 23 (IVIGIICAFIIIVQFIIGNVA) threads the bilayer. Over 24-46 (NGFIALVNIIDWVKRRKISLVDQ) the chain is Cytoplasmic. A helical transmembrane segment spans residues 47-67 (IITALAISRIDMLCSTFLIVL). At 68 to 87 (ITSLYPDLNTAVNMVKISNN) the chain is on the extracellular side. The chain crosses the membrane as a helical span at residues 88-108 (IWIVANHFSIWLATSLSIFYF). The Cytoplasmic segment spans residues 109–128 (LKIANFSNYVFLCLRWRLSK). Residues 129-149 (VVSVTLLLSLVLLLMNILIMN) form a helical membrane-spanning segment. Residues 150–185 (MHIDTWSDGFKRNVSFGFRSKNCTRFFKLALLINTT) are Extracellular-facing. 3 N-linked (GlcNAc...) asparagine glycosylation sites follow: N162, N171, and N183. Residues 186–206 (FTCVPFTVSMVAFLLLIFSLW) form a helical membrane-spanning segment. The Cytoplasmic segment spans residues 207–232 (RHLKNMQYHAKGSRDPSTAVHIKALQ). A helical membrane pass occupies residues 233–253 (MVVVFVLFYTFFFLSLAIQLW). Residues 254–261 (TSESLEKN) are Extracellular-facing. A helical membrane pass occupies residues 262–282 (NLFYVTLIITFPSVHSCMLIL). Topologically, residues 283–310 (RNSKLRQASLLVLWWLLCRSKDIQTLVP) are cytoplasmic.

This sequence belongs to the G-protein coupled receptor T2R family.

It localises to the membrane. Its function is as follows. Putative taste receptor which may play a role in the perception of bitterness. This chain is Taste receptor type 2 member 125, found in Rattus norvegicus (Rat).